A 166-amino-acid chain; its full sequence is Regulator of ribonuclease activity A (166 aa).

This sequence belongs to the RraA family. As to quaternary structure, homotrimer. Binds to both RNA-binding sites in the C-terminal region of Rne and to RhlB.

The protein resides in the cytoplasm. Functionally, globally modulates RNA abundance by binding to RNase E (Rne) and regulating its endonucleolytic activity. Can modulate Rne action in a substrate-dependent manner by altering the composition of the degradosome. Modulates RNA-binding and helicase activities of the degradosome. The sequence is that of Regulator of ribonuclease activity A from Histophilus somni (strain 129Pt) (Haemophilus somnus).